A 517-amino-acid chain; its full sequence is Gamma-1-syntrophin (517 aa).

In terms of domain architecture, PDZ spans 57–140 (TVTIRRQTVG…EVTLTVSFLK (84 aa)). The 108-residue stretch at 283 to 390 (QIVYMGWCEA…WERAFQTATF (108 aa)) folds into the PH domain.

It belongs to the syntrophin family. Isoform 1, but not isoform 2, interacts with the dystrophin protein DMD and related proteins DTNA and DTNB. Interacts with DGKZ. Brain specific. In CNS, it is expressed in the perikaryon and proximal portion of the neuronal processes. Strong expression in the hippocampus, neuron-rich dendate granule cells, and pyramidal cell layers. Highly expressed in neurons of the cerebral cortex. Also expressed in the cerebellar cortex, deep cerebellar nuclei, thalamus, and basal ganglia. No expression in muscle cells.

It localises to the cytoplasm. It is found in the cytoskeleton. Its subcellular location is the nucleus. Adapter protein that binds to and probably organizes the subcellular localization of a variety of proteins. May link various receptors to the actin cytoskeleton and the dystrophin glycoprotein complex. May participate in regulating the subcellular location of diacylglycerol kinase-zeta to ensure that diacylglycerol is rapidly inactivated following receptor activation. In Homo sapiens (Human), this protein is Gamma-1-syntrophin (SNTG1).